Consider the following 252-residue polypeptide: Ditrans,polycis-undecaprenyl-diphosphate synthase ((2E,6E)-farnesyl-diphosphate specific) (252 aa).

The active site involves Asp-24. Asp-24 is a Mg(2+) binding site. Substrate contacts are provided by residues 25–28 (GNGR), Trp-29, Arg-37, His-41, and 69–71 (SSE). The active-site Proton acceptor is the Asn-72. Trp-73, Arg-75, and Arg-192 together coordinate substrate. Residue His-197 participates in Mg(2+) binding. Position 198–200 (198–200 (RIS)) interacts with substrate. Residue Glu-211 participates in Mg(2+) binding.

Belongs to the UPP synthase family. As to quaternary structure, homodimer. Mg(2+) is required as a cofactor.

The enzyme catalyses 8 isopentenyl diphosphate + (2E,6E)-farnesyl diphosphate = di-trans,octa-cis-undecaprenyl diphosphate + 8 diphosphate. Functionally, catalyzes the sequential condensation of isopentenyl diphosphate (IPP) with (2E,6E)-farnesyl diphosphate (E,E-FPP) to yield (2Z,6Z,10Z,14Z,18Z,22Z,26Z,30Z,34E,38E)-undecaprenyl diphosphate (di-trans,octa-cis-UPP). UPP is the precursor of glycosyl carrier lipid in the biosynthesis of bacterial cell wall polysaccharide components such as peptidoglycan and lipopolysaccharide. The sequence is that of Ditrans,polycis-undecaprenyl-diphosphate synthase ((2E,6E)-farnesyl-diphosphate specific) from Yersinia pestis.